A 248-amino-acid chain; its full sequence is Pyridoxine 5'-phosphate synthase (248 aa).

Residue N12 participates in 3-amino-2-oxopropyl phosphate binding. 1-deoxy-D-xylulose 5-phosphate is bound at residue 14-15 (DH). A 3-amino-2-oxopropyl phosphate-binding site is contributed by R23. H48 functions as the Proton acceptor in the catalytic mechanism. R50 and H55 together coordinate 1-deoxy-D-xylulose 5-phosphate. The active-site Proton acceptor is E75. T105 is a binding site for 1-deoxy-D-xylulose 5-phosphate. H196 functions as the Proton donor in the catalytic mechanism. Residues G197 and 218 to 219 (GH) contribute to the 3-amino-2-oxopropyl phosphate site.

The protein belongs to the PNP synthase family. In terms of assembly, homooctamer; tetramer of dimers.

The protein localises to the cytoplasm. The catalysed reaction is 3-amino-2-oxopropyl phosphate + 1-deoxy-D-xylulose 5-phosphate = pyridoxine 5'-phosphate + phosphate + 2 H2O + H(+). It participates in cofactor biosynthesis; pyridoxine 5'-phosphate biosynthesis; pyridoxine 5'-phosphate from D-erythrose 4-phosphate: step 5/5. Catalyzes the complicated ring closure reaction between the two acyclic compounds 1-deoxy-D-xylulose-5-phosphate (DXP) and 3-amino-2-oxopropyl phosphate (1-amino-acetone-3-phosphate or AAP) to form pyridoxine 5'-phosphate (PNP) and inorganic phosphate. The sequence is that of Pyridoxine 5'-phosphate synthase from Pseudomonas aeruginosa (strain LESB58).